A 212-amino-acid chain; its full sequence is Acyl-homoserine-lactone synthase (212 aa).

The protein belongs to the autoinducer synthase family.

The catalysed reaction is a fatty acyl-[ACP] + S-adenosyl-L-methionine = an N-acyl-L-homoserine lactone + S-methyl-5'-thioadenosine + holo-[ACP] + H(+). Functionally, required for the synthesis of autoinducer molecules which bind to RaiR and that are involved in the restriction of nodule number. The polypeptide is Acyl-homoserine-lactone synthase (raiI) (Rhizobium etli).